The primary structure comprises 122 residues: Large ribosomal subunit protein bL17 (122 aa).

The protein belongs to the bacterial ribosomal protein bL17 family. In terms of assembly, part of the 50S ribosomal subunit. Contacts protein L32.

This Neisseria meningitidis serogroup B (strain ATCC BAA-335 / MC58) protein is Large ribosomal subunit protein bL17.